The sequence spans 592 residues: Potassium-transporting ATPase potassium-binding subunit (592 aa).

11 consecutive transmembrane segments (helical) span residues 7-27, 71-91, 136-156, 179-199, 287-307, 314-334, 411-431, 449-469, 473-493, 515-535, and 559-579; these read LQTVLLFVVLLAMVKPLGTFM, VLFNLVIFATLFAMLMLQHLL, GLTVHNFVSAATGIAVAIAVI, LYILVPISLIAALVLVSQGVI, LEILLILLIPFSLTYTFGAMV, WTLLGVMLLILLASFAVLQGV, GLYTMLAFAVIAVFVSGLMIG, SVVTVLAAGVMVLILSGIAMI, AVAAMANPGAHGLSEVLYAFA, ILGALAMIVGRFAPAVAVLAM, and FALWLTLVILIVGALTFFPAL.

This sequence belongs to the KdpA family. The system is composed of three essential subunits: KdpA, KdpB and KdpC.

Its subcellular location is the cell inner membrane. Part of the high-affinity ATP-driven potassium transport (or Kdp) system, which catalyzes the hydrolysis of ATP coupled with the electrogenic transport of potassium into the cytoplasm. This subunit binds the periplasmic potassium ions and delivers the ions to the membrane domain of KdpB through an intramembrane tunnel. The protein is Potassium-transporting ATPase potassium-binding subunit of Geobacter sulfurreducens (strain ATCC 51573 / DSM 12127 / PCA).